We begin with the raw amino-acid sequence, 106 residues long: Small ribosomal subunit protein bS18 (106 aa).

Residues 1–41 (MAEEHSNQRSQTFNGERTNRPSRKPRGDGERRGRRQGGRRR) are disordered.

It belongs to the bacterial ribosomal protein bS18 family. In terms of assembly, part of the 30S ribosomal subunit. Forms a tight heterodimer with protein bS6.

In terms of biological role, binds as a heterodimer with protein bS6 to the central domain of the 16S rRNA, where it helps stabilize the platform of the 30S subunit. In Oenococcus oeni (strain ATCC BAA-331 / PSU-1), this protein is Small ribosomal subunit protein bS18.